A 26-amino-acid chain; its full sequence is Orexigenic neuropeptide 26RFa (26 aa).

Phe26 carries the phenylalanine amide modification.

Brain.

It is found in the secreted. May have orexigenic activity. May promote aldosterone secretion by the adrenal gland. The polypeptide is Orexigenic neuropeptide 26RFa (Pelophylax lessonae (Pool frog)).